Consider the following 47-residue polypeptide: Large ribosomal subunit protein bL34 (47 aa).

Composition is skewed to basic residues over residues 1 to 22 (MAKG…HGFR) and 36 to 47 (ARRRKGRKSLTA). Residues 1–47 (MAKGKRTFQPNNRRRSRVHGFRSRMSTRAGRAIVSARRRKGRKSLTA) are disordered.

It belongs to the bacterial ribosomal protein bL34 family.

This is Large ribosomal subunit protein bL34 from Corynebacterium kroppenstedtii (strain DSM 44385 / JCM 11950 / CIP 105744 / CCUG 35717).